The chain runs to 54 residues: Large ribosomal subunit protein bL33A (54 aa).

Belongs to the bacterial ribosomal protein bL33 family.

The chain is Large ribosomal subunit protein bL33A from Myxococcus xanthus (strain DK1622).